Consider the following 314-residue polypeptide: Peroxisome biogenesis factor 10 (314 aa).

Residues 1–7 are Peroxisomal matrix-facing; it reads MNTYVAE. A helical transmembrane segment spans residues 8–37; sequence IGEIVRSQRRDEEYIEDITERLSRVSKELL. A topological domain (cytoplasmic) is located at residue G38. Residues 39–60 traverse the membrane as a helical segment; that stretch reads QRTWIRWFPYLKSIASTLYYTS. The Peroxisomal matrix segment spans residues 61 to 90; that stretch reads TVVLGNQTLGEEYVHLFESNGLERTVPSIP. Residues 91–110 traverse the membrane as a helical segment; the sequence is SRISFVLLHSAFPLISNYLI. Topologically, residues 111 to 142 are cytoplasmic; that stretch reads QKAESTLTHPSTESFLGIPIRKNQKARQSFLD. The helical transmembrane segment at 143 to 166 threads the bilayer; that stretch reads VFFWLRTKLFPQLQRAHIALFYIT. Residues 167-197 lie on the Peroxisomal matrix side of the membrane; sequence GAYYSIARRFTGIRFLSASAHSDIPALKVYR. Residues 198–218 traverse the membrane as a helical segment; sequence FLGYITLIQLAVSIGISLYSF. At 219-314 the chain is on the cytoplasmic side; sequence LEQEKFNNKL…PRDVTPLLNL (96 aa). 8 residues coordinate Zn(2+): C255, C258, C269, H271, C274, C277, C296, and C299. The RING-type zinc finger occupies 255–300; sequence CSICLENKNPSALFCGHLFCWTCIQEHAVAATSSASTSSARCPQCR.

The protein belongs to the pex2/pex10/pex12 family. As to quaternary structure, component of the PEX2-PEX10-PEX12 retrotranslocation channel.

It localises to the peroxisome membrane. It catalyses the reaction S-ubiquitinyl-[E2 ubiquitin-conjugating enzyme]-L-cysteine + [acceptor protein]-L-lysine = [E2 ubiquitin-conjugating enzyme]-L-cysteine + N(6)-ubiquitinyl-[acceptor protein]-L-lysine.. It participates in protein modification; protein ubiquitination. Its activity is regulated as follows. The E3 ubiquitin-protein ligase activity is stimulated by PEX12/prx-12. E3 ubiquitin-protein ligase component of a retrotranslocation channel required for peroxisome organization by mediating export of the PEX5/prx-5 receptor from peroxisomes to the cytosol, thereby promoting PEX5/prx-5 recycling. The retrotranslocation channel is composed of PEX2/prx-2, PEX10/prx-10 and PEX12/prx-12; each subunit contributing transmembrane segments that coassemble into an open channel that specifically allows the passage of PEX5/prx-5 through the peroxisomal membrane. PEX10/prx-10 also regulates PEX5 recycling by acting as a E3 ubiquitin-protein ligase. When PEX5/prx-5 recycling is compromised, PEX10/prx-10 catalyzes polyubiquitination of PEX5/prx-5 during its passage through the retrotranslocation channel, leading to its degradation. This Caenorhabditis elegans protein is Peroxisome biogenesis factor 10.